Here is a 526-residue protein sequence, read N- to C-terminus: Probable polyol transporter 4 (526 aa).

Disordered regions lie at residues 1-21 and 28-47; these read MMKN…AVSV and YQRM…AEAR. Residues 29–47 show a composition bias toward basic and acidic residues; that stretch reads QRMDSDAEESQNHREAEAR. A run of 12 helical transmembrane segments spans residues 63 to 83, 92 to 112, 125 to 145, 153 to 173, 180 to 200, 215 to 235, 300 to 320, 340 to 360, 371 to 391, 395 to 415, 437 to 457, and 465 to 485; these read SLNN…VLFI, VQTE…SLAG, MALA…APSF, TLAG…IAEI, GFFT…GYVS, IMLA…CVIP, MLIV…DATV, AATV…TFLI, VSTI…TFLG, LGIT…SIGM, ALGA…FLSV, and GTFF…YVLV.

Belongs to the major facilitator superfamily. Sugar transporter (TC 2.A.1.1) family.

Its subcellular location is the membrane. Functionally, plasma membrane sugar-proton symporter. The protein is Probable polyol transporter 4 (PLT4) of Arabidopsis thaliana (Mouse-ear cress).